The chain runs to 491 residues: Immediate early protein IE1 (491 aa).

The span at 1 to 11 shows a compositional bias: basic and acidic residues; that stretch reads MESSAKRKMDP. Positions 1-24 are nuclear localization signal; sequence MESSAKRKMDPDNPDEGPSSKVPR. The interval 1–30 is disordered; the sequence is MESSAKRKMDPDNPDEGPSSKVPRPETPVT. The segment at 132–346 is interaction with host PML, interference with PML sumoylation and disruption of PML-associated nuclear bodies; it reads ILDKVHEPFE…SVMKRRIEEI (215 aa). The segment at 373 to 445 is interaction with host STAT2; it reads AIAEESDEEE…EEGAQEERED (73 aa). The modulation of STAT3/STAT1 signaling stretch occupies residues 410–420; sequence ATIPLSSVIVA. The tract at residues 410 to 445 is interaction with host STAT3; it reads ATIPLSSVIVAENSDQEESEQSDEEQEEGAQEERED. Positions 421 to 472 are acidic; that stretch reads ENSDQEESEQSDEEQEEGAQEEREDTVSVKSEPVSEIEEVASEEEEDGAEEP. The segment at 421 to 491 is disordered; the sequence is ENSDQEESEQ…PMVTRSKADQ (71 aa). A compositionally biased stretch (acidic residues) spans 423–444; that stretch reads SDQEESEQSDEEQEEGAQEERE. The interaction with host SUMO1 stretch occupies residues 449–452; it reads VKSE. Residue Lys450 forms a Glycyl lysine isopeptide (Lys-Gly) (interchain with G-Cter in SUMO) linkage. Residues 455–470 are compositionally biased toward acidic residues; it reads SEIEEVASEEEEDGAE. Positions 475 to 491 are chromosome-tethering domain (CTD), binding to histones; that stretch reads SGGKSTHPMVTRSKADQ.

Belongs to the HHV-5 IE1 protein family. Forms homodimers. Interacts with human p53/TP53; this interaction inhibits p53/TP53-dependent transactivation activity. Interacts with host STAT1. Interacts with host STAT2; this interaction promotes viral growth and counteracts the antiviral interferon response. May also interact with the host STAT1-STAT2 heterodimer. Interacts with host STAT3; this interaction leads to STAT3 nuclear accumulation and disruption of IL6-induced STAT3 phosphorylation. Interacts with host PML; this interaction probably inhibits PML regulation of type I and type II interferon-induced gene expression. Interacts with host DAXX. Interacts with host SP100. Interacts with host E2F1. Interacts with host RB1. Interacts with host HDAC1; this interaction inhibits histone deacetylation and promotes viral transcription. Interacts with host HDAC2; this interaction inhibits histone deacetylation and promotes viral transcription. Interacts with host HDAC3; this interaction inhibits histone deacetylation and promotes viral transcription. Interacts with host PLSCR1; this interaction inhibits IE1 transactivating activity. Sumoylated by host PML/nuclear domain 10. Sumoylation abolishes the interaction with host STAT2 and thus the IE1-mediated repression of interferon-stimulated genes.

It is found in the host nucleus. Its function is as follows. Plays an important role in transactivating viral early genes as well as activating its own promoter, probably by altering the viral chromatin structure. Expression of IE1 and IE2 proteins is critical for the establishment of lytic infection and reactivation from viral latency. Disrupts PML-associated ND10 nuclear bodies by interfering with host PML and SP100 sumoylation thereby altering the regulation of type I and type II interferon-induced gene expression. Promotes efficient viral growth by interacting with and directing host SP100 to degradation, leading to enhanced acetylation level of histones. In addition, functions in counteracting the host innate antiviral response. Inhibits the type I interferon pathway by directly interacting with and sequestrating host STAT2. Also targets type II interferon pathway by repressing IL6- and STAT3 target genes. Repression of STAT3 genes is due to STAT3 nuclear accumulation and disruption of IL6-induced STAT3 phosphorylation by IE1. This repression is followed by phosphorylation and activation of STAT1. Inhibits host ISG transcription by sequestering host ISGF3 in a PML- and STAT2- binding dependent manner. Alters host cell cycle progression, probably through its interaction with host E2F1 or RB1 that overcomes the RB1-mediated repression of E2F-responsive promoters. This is Immediate early protein IE1 (UL123) from Human cytomegalovirus (strain Merlin) (HHV-5).